The primary structure comprises 270 residues: Imidazole glycerol phosphate synthase subunit HisF (270 aa).

Residues Asp11 and Asp130 contribute to the active site.

The protein belongs to the HisA/HisF family. Heterodimer of HisH and HisF.

It is found in the cytoplasm. The catalysed reaction is 5-[(5-phospho-1-deoxy-D-ribulos-1-ylimino)methylamino]-1-(5-phospho-beta-D-ribosyl)imidazole-4-carboxamide + L-glutamine = D-erythro-1-(imidazol-4-yl)glycerol 3-phosphate + 5-amino-1-(5-phospho-beta-D-ribosyl)imidazole-4-carboxamide + L-glutamate + H(+). It functions in the pathway amino-acid biosynthesis; L-histidine biosynthesis; L-histidine from 5-phospho-alpha-D-ribose 1-diphosphate: step 5/9. IGPS catalyzes the conversion of PRFAR and glutamine to IGP, AICAR and glutamate. The HisF subunit catalyzes the cyclization activity that produces IGP and AICAR from PRFAR using the ammonia provided by the HisH subunit. The protein is Imidazole glycerol phosphate synthase subunit HisF of Chloroflexus aggregans (strain MD-66 / DSM 9485).